A 57-amino-acid chain; its full sequence is Probable mRNA interferase HicA 1 (57 aa).

Belongs to the HicA mRNA interferase family. In terms of assembly, probably forms a complex with the cognate antitoxin HicB 1 which inhibits the mRNA interferase activity.

Its function is as follows. Toxic component of a type II toxin-antitoxin (TA) system. A probable translation-independent mRNA interferase. The polypeptide is Probable mRNA interferase HicA 1 (hicA1) (Photorhabdus laumondii subsp. laumondii (strain DSM 15139 / CIP 105565 / TT01) (Photorhabdus luminescens subsp. laumondii)).